Reading from the N-terminus, the 480-residue chain is Glutamyl-tRNA(Gln) amidotransferase subunit A (480 aa).

Catalysis depends on charge relay system residues Lys79 and Ser154. The interval 133–156 (NENSAYGPVRNPRDKSRVPGGSSG) is disordered. The Acyl-ester intermediate role is filled by Ser178.

The protein belongs to the amidase family. GatA subfamily. Heterotrimer of A, B and C subunits.

It catalyses the reaction L-glutamyl-tRNA(Gln) + L-glutamine + ATP + H2O = L-glutaminyl-tRNA(Gln) + L-glutamate + ADP + phosphate + H(+). Its function is as follows. Allows the formation of correctly charged Gln-tRNA(Gln) through the transamidation of misacylated Glu-tRNA(Gln) in organisms which lack glutaminyl-tRNA synthetase. The reaction takes place in the presence of glutamine and ATP through an activated gamma-phospho-Glu-tRNA(Gln). The chain is Glutamyl-tRNA(Gln) amidotransferase subunit A from Koribacter versatilis (strain Ellin345).